A 361-amino-acid polypeptide reads, in one-letter code: Putative agmatine deiminase (361 aa).

Cysteine 354 serves as the catalytic Amidino-cysteine intermediate.

It belongs to the agmatine deiminase family.

The catalysed reaction is agmatine + H2O = N-carbamoylputrescine + NH4(+). This Streptococcus pneumoniae (strain 70585) protein is Putative agmatine deiminase.